A 696-amino-acid polypeptide reads, in one-letter code: SEC14 domain and spectrin repeat-containing protein 1 (696 aa).

The CRAL-TRIO domain maps to 1 to 153 (MDATVILPIL…EFGGSLTYDH (153 aa)). Spectrin repeat units follow at residues 272–378 (TQLD…NLLQ), 381–494 (LDFH…LKML), and 500–602 (FKCE…HRLE).

Belongs to the SOLO family.

May act as the primary docking protein directing membrane turnover and assembly of the transient receptor potential channels trpc4 and trpc5. Binds phospholipids. This chain is SEC14 domain and spectrin repeat-containing protein 1 (sestd1), found in Xenopus tropicalis (Western clawed frog).